We begin with the raw amino-acid sequence, 393 residues long: 1-deoxy-D-xylulose 5-phosphate reductoisomerase (393 aa).

NADPH-binding residues include threonine 13, glycine 14, serine 15, isoleucine 16, and asparagine 128. Lysine 129 serves as a coordination point for 1-deoxy-D-xylulose 5-phosphate. An NADPH-binding site is contributed by glutamate 130. Position 154 (aspartate 154) interacts with Mn(2+). Serine 155, glutamate 156, serine 178, and histidine 201 together coordinate 1-deoxy-D-xylulose 5-phosphate. Residue glutamate 156 participates in Mn(2+) binding. An NADPH-binding site is contributed by glycine 207. 4 residues coordinate 1-deoxy-D-xylulose 5-phosphate: serine 214, asparagine 219, lysine 220, and glutamate 223. Glutamate 223 is a Mn(2+) binding site.

Belongs to the DXR family. The cofactor is Mg(2+). It depends on Mn(2+) as a cofactor.

The catalysed reaction is 2-C-methyl-D-erythritol 4-phosphate + NADP(+) = 1-deoxy-D-xylulose 5-phosphate + NADPH + H(+). It participates in isoprenoid biosynthesis; isopentenyl diphosphate biosynthesis via DXP pathway; isopentenyl diphosphate from 1-deoxy-D-xylulose 5-phosphate: step 1/6. In terms of biological role, catalyzes the NADPH-dependent rearrangement and reduction of 1-deoxy-D-xylulose-5-phosphate (DXP) to 2-C-methyl-D-erythritol 4-phosphate (MEP). The sequence is that of 1-deoxy-D-xylulose 5-phosphate reductoisomerase from Acidithiobacillus ferrooxidans (strain ATCC 23270 / DSM 14882 / CIP 104768 / NCIMB 8455) (Ferrobacillus ferrooxidans (strain ATCC 23270)).